A 310-amino-acid chain; its full sequence is Ribosomal RNA small subunit methyltransferase H (310 aa).

Residues 47-49 (GGH), D66, F93, D108, and Q115 each bind S-adenosyl-L-methionine.

The protein belongs to the methyltransferase superfamily. RsmH family.

The protein localises to the cytoplasm. The enzyme catalyses cytidine(1402) in 16S rRNA + S-adenosyl-L-methionine = N(4)-methylcytidine(1402) in 16S rRNA + S-adenosyl-L-homocysteine + H(+). Its function is as follows. Specifically methylates the N4 position of cytidine in position 1402 (C1402) of 16S rRNA. This chain is Ribosomal RNA small subunit methyltransferase H, found in Prochlorococcus marinus (strain MIT 9303).